Reading from the N-terminus, the 222-residue chain is MLNLRAVMELLTIEKAQDYGLTLPETGQRDQVLHDALVGYLANSRSGTRATKTKATVKASGKKPWRQKGTGRARAGYVSSPVWVGGGVVFGPQPRDFSKNIPKKIKGLALLKAFAAKVRSEEVYCLEKVEMTEIKTKKMLSLLEGWDGKESGLLILKNPSRNVLLSGRNIPHLGIVRAQDVNALDLLGFKKVFLERPAIEVLVERVKKFKREKSQNENGGTR.

Belongs to the universal ribosomal protein uL4 family. As to quaternary structure, part of the 50S ribosomal subunit.

Its function is as follows. One of the primary rRNA binding proteins, this protein initially binds near the 5'-end of the 23S rRNA. It is important during the early stages of 50S assembly. It makes multiple contacts with different domains of the 23S rRNA in the assembled 50S subunit and ribosome. Forms part of the polypeptide exit tunnel. The polypeptide is Large ribosomal subunit protein uL4 (Methylacidiphilum infernorum (isolate V4) (Methylokorus infernorum (strain V4))).